Reading from the N-terminus, the 286-residue chain is Beta-lactamase Ohio-1 (286 aa).

Positions 1-21 (MRYFRLCIISLLATLPLRVHA) are cleaved as a signal peptide. The active-site Acyl-ester intermediate is the S66. C73 and C119 are disulfide-bonded. Residue E164 is the Proton acceptor of the active site. Position 230–232 (230–232 (KTG)) interacts with substrate.

It belongs to the class-A beta-lactamase family.

It carries out the reaction a beta-lactam + H2O = a substituted beta-amino acid. In Enterobacter cloacae, this protein is Beta-lactamase Ohio-1.